The following is a 427-amino-acid chain: Serine--tRNA ligase (427 aa).

231–233 (TAE) provides a ligand contact to L-serine. 262-264 (RSE) is a binding site for ATP. Glutamate 285 contributes to the L-serine binding site. 349–352 (EISS) provides a ligand contact to ATP. Serine 385 contacts L-serine.

It belongs to the class-II aminoacyl-tRNA synthetase family. Type-1 seryl-tRNA synthetase subfamily. In terms of assembly, homodimer. The tRNA molecule binds across the dimer.

The protein resides in the cytoplasm. The catalysed reaction is tRNA(Ser) + L-serine + ATP = L-seryl-tRNA(Ser) + AMP + diphosphate + H(+). The enzyme catalyses tRNA(Sec) + L-serine + ATP = L-seryl-tRNA(Sec) + AMP + diphosphate + H(+). It functions in the pathway aminoacyl-tRNA biosynthesis; selenocysteinyl-tRNA(Sec) biosynthesis; L-seryl-tRNA(Sec) from L-serine and tRNA(Sec): step 1/1. Its function is as follows. Catalyzes the attachment of serine to tRNA(Ser). Is also able to aminoacylate tRNA(Sec) with serine, to form the misacylated tRNA L-seryl-tRNA(Sec), which will be further converted into selenocysteinyl-tRNA(Sec). The protein is Serine--tRNA ligase of Listeria monocytogenes serotype 4b (strain CLIP80459).